A 353-amino-acid polypeptide reads, in one-letter code: GDP-mannose transporter (353 aa).

Residues 1–31 are Cytoplasmic-facing; sequence MGLLLSYLFGYIFYSVNKKFHIMEKFGASNS. Residues 32 to 52 form a helical membrane-spanning segment; sequence IVNNGPVSIFAYCASSILMTV. The Lumenal segment spans residues 53-66; that stretch reads TNKFVVGAYEFNLN. Residues 67-87 form a helical membrane-spanning segment; it reads FFLLAVQAAVCLVTIATLKGL. Residues 88–102 are Cytoplasmic-facing; sequence GIITYRQFNKDEAKK. Residues 103–122 traverse the membrane as a helical segment; that stretch reads WFPIAFLLVLMIYTSSKALQ. The Lumenal segment spans residues 123–125; the sequence is YLS. A helical membrane pass occupies residues 126–148; it reads IPVYTIFKNLTIILIAYGEVIWF. Over 149-154 the chain is Cytoplasmic; sequence GGKVTT. The helical transmembrane segment at 155–172 threads the bilayer; the sequence is MALGSFILMVLSSVIAYY. Residues 173-187 are Lumenal-facing; it reads GDTAETGEKTAEMHL. A helical transmembrane segment spans residues 188–208; it reads LYLGYAWMFTNCFSSAAFVLI. Residues 209 to 227 are Cytoplasmic-facing; it reads MRKRIKLTNFKDFDTMYYN. The chain crosses the membrane as a helical span at residues 228–248; it reads NLLSLPLLLVFSFLFEDWSSV. Residues 249–262 lie on the Lumenal side of the membrane; that stretch reads NLNKNFPPDNRNTT. An N-linked (GlcNAc...) asparagine glycan is attached at asparagine 260. Residues 263-283 traverse the membrane as a helical segment; that stretch reads IFVMILSGASSVGISYCSAWC. Residues 284–290 are Cytoplasmic-facing; that stretch reads VRVTSST. The helical transmembrane segment at 291–313 threads the bilayer; it reads TYSMVGALNKLPIALSGLVFFNA. Residues 314–316 are Lumenal-facing; the sequence is AVN. Residues 317–336 traverse the membrane as a helical segment; the sequence is FWSVSSIFVGFLAGVFYAVA. Topologically, residues 337-353 are cytoplasmic; that stretch reads KQKQQKENAQQLPVANK.

It belongs to the TPT transporter family. SLC35D subfamily. Homooligomer.

The protein resides in the golgi apparatus membrane. The protein localises to the cytoplasmic vesicle membrane. It localises to the endoplasmic reticulum membrane. Its function is as follows. Involved in the import of GDP-mannose from the cytoplasm into the Golgi lumen. This chain is GDP-mannose transporter (VRG4), found in Meyerozyma guilliermondii (strain ATCC 6260 / CBS 566 / DSM 6381 / JCM 1539 / NBRC 10279 / NRRL Y-324) (Yeast).